Consider the following 302-residue polypeptide: Probable alpha-L-glutamate ligase 1 (302 aa).

Residues M104–E287 form the ATP-grasp domain. ATP is bound by residues K141, E178–Y179, D187, and R211–N213. 3 residues coordinate Mg(2+): D248, E260, and N262. The Mn(2+) site is built by D248, E260, and N262.

This sequence belongs to the RimK family. Mg(2+) is required as a cofactor. It depends on Mn(2+) as a cofactor.

In Pseudoalteromonas atlantica (strain T6c / ATCC BAA-1087), this protein is Probable alpha-L-glutamate ligase 1.